The chain runs to 223 residues: 7-cyano-7-deazaguanine synthase (223 aa).

15–25 (FSGGQDSTTCL) lines the ATP pocket. The Zn(2+) site is built by C191, C200, C203, and C206.

The protein belongs to the QueC family. As to quaternary structure, homodimer. Zn(2+) is required as a cofactor.

The catalysed reaction is 7-carboxy-7-deazaguanine + NH4(+) + ATP = 7-cyano-7-deazaguanine + ADP + phosphate + H2O + H(+). It functions in the pathway purine metabolism; 7-cyano-7-deazaguanine biosynthesis. Its function is as follows. Catalyzes the ATP-dependent conversion of 7-carboxy-7-deazaguanine (CDG) to 7-cyano-7-deazaguanine (preQ(0)). The sequence is that of 7-cyano-7-deazaguanine synthase from Staphylococcus epidermidis (strain ATCC 35984 / DSM 28319 / BCRC 17069 / CCUG 31568 / BM 3577 / RP62A).